Reading from the N-terminus, the 394-residue chain is Na(+)/H(+) antiporter NhaA (394 aa).

Helical transmembrane passes span A14–L34, L59–V79, V95–F115, G125–G145, V154–F174, V179–W199, L213–V233, G254–V274, I292–V312, I328–L348, and L363–V383.

It belongs to the NhaA Na(+)/H(+) (TC 2.A.33) antiporter family.

The protein localises to the cell inner membrane. The catalysed reaction is Na(+)(in) + 2 H(+)(out) = Na(+)(out) + 2 H(+)(in). Functionally, na(+)/H(+) antiporter that extrudes sodium in exchange for external protons. This is Na(+)/H(+) antiporter NhaA from Yersinia pseudotuberculosis serotype IB (strain PB1/+).